Consider the following 324-residue polypeptide: Olfactory receptor 5A2 (324 aa).

The Extracellular segment spans residues 1 to 26 (MAVGRNNTIVTKFILLGLSDHPQMKI). N-linked (GlcNAc...) asparagine glycosylation occurs at N6. The chain crosses the membrane as a helical span at residues 27 to 47 (FLFMLFLGLYLLTLAWNLSLI). The Cytoplasmic segment spans residues 48 to 55 (ALIKMDSH). Residues 56-76 (LHMPMYFFLSNLSFLDICYVS) traverse the membrane as a helical segment. Residues 77-100 (STAPKMLSDIITEQKTISFVGCAT) lie on the Extracellular side of the membrane. C98 and C190 are oxidised to a cystine. A helical membrane pass occupies residues 101–121 (QYFVFCGMGLTECFLLAAMAY). The Cytoplasmic segment spans residues 122–134 (DRYAAICNPLLYT). Residues 135–155 (VLISHTLCLKMVVGAYVGGFL) traverse the membrane as a helical segment. The Extracellular portion of the chain corresponds to 156–197 (SSFIETYSVYQHDFCGPYMINHFFCDLPPVLALSCSDTFTSE). Residues 198-218 (VVTFIVSVVVGIVSVLVVLIS) traverse the membrane as a helical segment. Residues 219–238 (YGYIVAAVVKISSATGRTKA) are Cytoplasmic-facing. The helical transmembrane segment at 239 to 259 (FSTCASHLTAVTLFYGSGFFM) threads the bilayer. At 260-272 (YMRPSSSYSLNRD) the chain is on the extracellular side. The helical transmembrane segment at 273-293 (KVVSIFYALVIPVVNPIIYSF) threads the bilayer. Residues 294–324 (RNKEIKNAMRKAMERDPGISHGGPFIFMTLG) lie on the Cytoplasmic side of the membrane.

This sequence belongs to the G-protein coupled receptor 1 family.

The protein localises to the cell membrane. Odorant receptor. This is Olfactory receptor 5A2 (OR5A2) from Homo sapiens (Human).